The primary structure comprises 433 residues: Nuclear hormone receptor family member nhr-98 (433 aa).

Positions 41–116 form a DNA-binding region, nuclear receptor; sequence SKKCQICENP…FGMTIDNFQF (76 aa). NR C4-type zinc fingers lie at residues 44–64 and 80–104; these read CQIC…CRAC and CKTE…MQRC. In terms of domain architecture, NR LBD spans 177-433; that stretch reads ETPYQVSNVL…CSHPGIFLNA (257 aa).

Belongs to the nuclear hormone receptor family.

It localises to the nucleus. Its function is as follows. Orphan nuclear receptor. The chain is Nuclear hormone receptor family member nhr-98 (nhr-98) from Caenorhabditis elegans.